Reading from the N-terminus, the 341-residue chain is MLVLGLETSCDETGVALYDSERGLLADALFSQIDLHRVYGGVVPELASRDHVKRMLPLIRQVLAEAGREPGQVDAVAYTAGPGLVGALLVGASCAQALALAWGVPAVGVHHMEGHLLAPMLEAQPPAFPFVALLVSGGHTQLVRVDGIGRYELLGESVDDAAGEAFDKTAKLMGLRYPGGPEIARLAEQGTPGRFVFPRPMTDRPGLDFSFSGLKTFTLNTWQQCRDAGDDSEQTRCDIALAFQQAVVETLTIKCRRALKQTGLKSLVIAGGVSANQSLRQSLETMLAELKGQVFYARPRFCTDNGAMIAYAGCQRLLAGQHDGPAIAVQPRWSMETLPAI.

2 residues coordinate Fe cation: histidine 111 and histidine 115. Substrate contacts are provided by residues 134 to 138, aspartate 167, glycine 180, and asparagine 276; that span reads LVSGG. A Fe cation-binding site is contributed by aspartate 304.

This sequence belongs to the KAE1 / TsaD family. Requires Fe(2+) as cofactor.

It is found in the cytoplasm. It carries out the reaction L-threonylcarbamoyladenylate + adenosine(37) in tRNA = N(6)-L-threonylcarbamoyladenosine(37) in tRNA + AMP + H(+). Functionally, required for the formation of a threonylcarbamoyl group on adenosine at position 37 (t(6)A37) in tRNAs that read codons beginning with adenine. Is involved in the transfer of the threonylcarbamoyl moiety of threonylcarbamoyl-AMP (TC-AMP) to the N6 group of A37, together with TsaE and TsaB. TsaD likely plays a direct catalytic role in this reaction. The chain is tRNA N6-adenosine threonylcarbamoyltransferase from Stutzerimonas stutzeri (strain A1501) (Pseudomonas stutzeri).